The primary structure comprises 289 residues: 4-diphosphocytidyl-2-C-methyl-D-erythritol kinase (289 aa).

Lys-10 is a catalytic residue. Position 94-104 (94-104 (PVAAGLAGGSS)) interacts with ATP. Asp-136 is an active-site residue.

Belongs to the GHMP kinase family. IspE subfamily.

The enzyme catalyses 4-CDP-2-C-methyl-D-erythritol + ATP = 4-CDP-2-C-methyl-D-erythritol 2-phosphate + ADP + H(+). The protein operates within isoprenoid biosynthesis; isopentenyl diphosphate biosynthesis via DXP pathway; isopentenyl diphosphate from 1-deoxy-D-xylulose 5-phosphate: step 3/6. Its function is as follows. Catalyzes the phosphorylation of the position 2 hydroxy group of 4-diphosphocytidyl-2C-methyl-D-erythritol. The protein is 4-diphosphocytidyl-2-C-methyl-D-erythritol kinase of Bacillus anthracis (strain CDC 684 / NRRL 3495).